The primary structure comprises 457 residues: Protein translocase subunit SecY (457 aa).

10 helical membrane passes run 17–37 (IFFT…PVPG), 75–95 (IALG…LVVF), 120–140 (LFTL…ALRM), 163–183 (VFYL…MWIG), 195–215 (ISLI…GSIF), 230–250 (IVSL…TVLI), 287–307 (VIPV…GQFL), 326–346 (VVYS…WTAT), 386–406 (LLGA…GRIL), and 412–432 (VSYF…LDTM).

Belongs to the SecY/SEC61-alpha family. In terms of assembly, component of the Sec protein translocase complex. Heterotrimer consisting of SecY, SecE and SecG subunits. The heterotrimers can form oligomers, although 1 heterotrimer is thought to be able to translocate proteins. Interacts with the ribosome. Interacts with SecDF, and other proteins may be involved. Interacts with SecA.

Its subcellular location is the cell inner membrane. Its function is as follows. The central subunit of the protein translocation channel SecYEG. Consists of two halves formed by TMs 1-5 and 6-10. These two domains form a lateral gate at the front which open onto the bilayer between TMs 2 and 7, and are clamped together by SecE at the back. The channel is closed by both a pore ring composed of hydrophobic SecY resides and a short helix (helix 2A) on the extracellular side of the membrane which forms a plug. The plug probably moves laterally to allow the channel to open. The ring and the pore may move independently. This is Protein translocase subunit SecY from Chlamydia muridarum (strain MoPn / Nigg).